Here is a 116-residue protein sequence, read N- to C-terminus: Prefoldin subunit beta (116 aa).

Belongs to the prefoldin subunit beta family. As to quaternary structure, heterohexamer of two alpha and four beta subunits.

It is found in the cytoplasm. In terms of biological role, molecular chaperone capable of stabilizing a range of proteins. Seems to fulfill an ATP-independent, HSP70-like function in archaeal de novo protein folding. This is Prefoldin subunit beta (pfdB) from Archaeoglobus fulgidus (strain ATCC 49558 / DSM 4304 / JCM 9628 / NBRC 100126 / VC-16).